Reading from the N-terminus, the 180-residue chain is UDP-4-amino-4,6-dideoxy-N-acetyl-beta-L-altrosamine N-acetyltransferase (180 aa).

An N-acetyltransferase domain is found at 13-169 (IDFTNLNDGE…IDVLLYYKDK (157 aa)).

It carries out the reaction UDP-4-amino-4,6-dideoxy-N-acetyl-beta-L-altrosamine + acetyl-CoA = UDP-2,4-diacetamido-2,4,6-trideoxy-beta-L-altrose + CoA + H(+). Catalyzes the third step in the biosynthesis of pseudaminic acid, a sialic-acid-like sugar that is used to modify flagellin. Mediates N-4 acetylation of UDP-4-amino-4,6-dideoxy-beta-L-AltNAc to form UDP-2,4-diacetamido-2,4,6-trideoxy-beta-L-altropyranose. This is UDP-4-amino-4,6-dideoxy-N-acetyl-beta-L-altrosamine N-acetyltransferase (pseH) from Helicobacter pylori (strain ATCC 700392 / 26695) (Campylobacter pylori).